A 282-amino-acid chain; its full sequence is MGRSPCCEKAHTNKGAWTKEEDERLVAYIKAHGEGCWRSLPKAAGLLRCGKSCRLRWINYLRPDLKRGNFTEEEDELIIKLHSLLGNKWSLIAGRLPGRTDNEIKNYWNTHIRRKLINRGIDPTSHRPIQESSASQDSKPTQLEPVTSNTINISFTSAPKVETFHESISFPGKSEKISMLTFKEEKDECPVQEKFPDLNLELRISLPDDVDRLQGHGKSTTPRCFKCSLGMINGMECRCGRMRCDVVGGSSKGSDMSNGFDFLGLAKKETTSLLGFRSLEMK.

HTH myb-type domains are found at residues 9–61 and 62–116; these read KAHT…INYL and RPDL…RRKL. DNA-binding regions (H-T-H motif) lie at residues 37-61 and 89-112; these read WRSL…INYL and WSLI…NTHI. Residues 119 to 145 are disordered; that stretch reads RGIDPTSHRPIQESSASQDSKPTQLEP. Polar residues predominate over residues 130–145; the sequence is QESSASQDSKPTQLEP.

As to quaternary structure, interacts with BHLH12/MYC1 and BHLH42/TT8. Interacts with SAD2. Widely expressed at low level. Highly expressed in siliques. Weakly expressed in seedlings, young and mature leaves, cauline leaves, stems, flower buds and roots.

It is found in the nucleus. In terms of biological role, transcription repressor involved in regulation of protection against UV. Mediates transcriptional repression of CYP73A5, the gene encoding trans-cinnamate 4-monooxygenase, thereby regulating the accumulation of the UV-protectant compound sinapoylmalate. This is Transcription repressor MYB4 (MYB4) from Arabidopsis thaliana (Mouse-ear cress).